Here is a 1137-residue protein sequence, read N- to C-terminus: MKCVFVTVGTTSFDDLIACVSAPDSLQKIESLGYNRLILQIGRGTVVPEPFSTESFTLDVYRYKDSLKEDIQKADLVISHAGAGSCLETLEKGKPLVVVINEKLMNNHQLELAKQLHKEGHLFYCTCRVLTCPGQAKSIASAPGKCQDSAALTSTAFSGLDFGLLSGYLHKQALVTATHPTCTLLFPSCHAFFPLPLTPTLYKMHKGWKNYCSQKSLNEASMDEYLGSLGLFRKLTAKDASCLFRAISEQLFCSQVHHLEIRKACVSYMRENQQTFESYVEGSFEKYLERLGDPKESAGQLEIRALSLIYNRDFILYRFPGKPPTYVTDNGYEDKILLCYSSSGHYDSVYSKQFQSSAAVCQAVLYEILYKDVFVVDEEELKTAIKLFRSGSKKNRNNAVTGSEDAHTDYKSSNQNRMEEWGACYNAENIPEGYNKGTEETKSPENPSKMPFPYKVLKALDPEIYRNVEFDVWLDSRKELQKSDYMEYAGRQYYLGDKCQVCLESEGRYYNAHIQEVGNENNSVTVFIEELAEKHVVPLANLKPVTQVMSVPAWNAMPSRKGRGYQKMPGGYVPEIVISEMDIKQQKKMFKKIRGKEVYMTMAYGKGDPLLPPRLQHSMHYGHDPPMHYSQTAGNVMSNEHFHPQHPSPRQGRGYGMPRNSSRFINRHNMPGPKVDFYPGPGKRCCQSYDNFSYRSRSFRRSHRQMSCVNKESQYGFTPGNGQMPRGLEETITFYEVEEGDETAYPTLPNHGGPSTMVPATSGYCVGRRGHSSGKQTLNLEEGNGQSENGRYHEEYLYRAEPDYETSGVYSTTASTANLSLQDRKSCSMSPQDTVTSYNYPQKMMGNIAAVAASCANNVPAPVLSNGAAANQAISTTSVSSQNAIQPLFVSPPTHGRPVIASPSYPCHSAIPHAGASLPPPPPPPPPPPPPPPPPPPPPPPPPPPALDVGETSNLQPPPPLPPPPYSCDPSGSDLPQDTKVLQYYFNLGLQCYYHSYWHSMVYVPQMQQQLHVENYPVYTEPPLVDQTVPQCYSEVRREDGIQAEASANDTFPNADSSSVPHGAVYYPVMSDPYGQPPLPGFDSCLPVVPDYSCVPPWHPVGTAYGGSSQIHGAINPGPIGCIAPSPPASHYVPQGM.

Positions 1–125 (MKCVFVTVGT…LHKEGHLFYC (125 aa)) are glycosyltransferase activity. Residues 126–400 (TCRVLTCPGQ…GSKKNRNNAV (275 aa)) are deubiquitinase activity. One can recognise an OTU domain in the interval 231–352 (LFRKLTAKDA…SGHYDSVYSK (122 aa)). Aspartate 239 acts as the For deubiquitinase activity in catalysis. The active-site Nucleophile; for deubiquitinase activity is cysteine 242. Catalysis depends on histidine 345, which acts as the For deubiquitinase activity. The 61-residue stretch at 492–552 (QYYLGDKCQV…KPVTQVMSVP (61 aa)) folds into the Tudor domain. Disordered stretches follow at residues 641-660 (HFHP…MPRN) and 911-974 (IPHA…SGSD). Pro residues-rich tracts occupy residues 918–946 (LPPP…PPPA) and 956–967 (QPPPPLPPPPYS).

Belongs to the glycosyltransferase 28 family. As to quaternary structure, forms with ALG14 the active heterodimeric UDP-N-acetylglucosamine transferase complex. In terms of assembly, not able to interact with ALG14 to form an active UDP-N-acetylglucosamine transferase complex.

Its subcellular location is the endoplasmic reticulum membrane. The catalysed reaction is an N-acetyl-alpha-D-glucosaminyl-diphospho-di-trans,poly-cis-dolichol + UDP-N-acetyl-alpha-D-glucosamine = an N,N'-diacetylchitobiosyl-diphospho-di-trans,poly-cis-dolichol + UDP + H(+). It participates in protein modification; protein glycosylation. In terms of biological role, catalytic subunit of the UDP-N-acetylglucosamine transferase complex that operates in the biosynthetic pathway of dolichol-linked oligosaccharides, the glycan precursors employed in protein asparagine (N)-glycosylation. The assembly of dolichol-linked oligosaccharides begins on the cytosolic side of the endoplasmic reticulum membrane and finishes in its lumen. The sequential addition of sugars to dolichol pyrophosphate produces dolichol-linked oligosaccharides containing fourteen sugars, including two GlcNAcs, nine mannoses and three glucoses. Once assembled, the oligosaccharide is transferred from the lipid to nascent proteins by oligosaccharyltransferases. On the cytoplasmic face of the endoplasmic reticulum, the dimeric ALG13/ALG14 complex catalyzes the second step of dolichol pyrophosphate biosynthesis, transferring a beta1,4-linked N-acetylglucosamine (GlcNAc) from UDP-GlcNAc to GlcNAc-pyrophosphatedolichol (Gn-PDol) to produce N,N'-diacetylchitobiosyl diphosphodolichol. N,N'-diacetylchitobiosyl diphosphodolichol is a substrate for ALG1, the following enzyme in the biosynthetic pathway. Its function is as follows. No glycosyltransferase or deubiquitinase activity is detected for this potential multifunctional enzyme. The protein is UDP-N-acetylglucosamine transferase subunit ALG13 of Homo sapiens (Human).